The sequence spans 245 residues: MSRISLEVCVDDPDGLEAAVAGGADRIELCSALGAGGLTPSPGLMAVAAPPPVPVYAMIRPRAGDFIYHRADLEVMRRDIDAARHAGLAGVVLGASLADGRLDARMLTKLAGHAAGMGLTLHRAFDLVPDFAEAMEIAVDLGFERILTSGGAKTAPEAVDTLERLIELSAGRISIMPGSGITSDTIEALVPRLAITEVHSSCSSAEPANDMRLVEMGFAAPERRRTDAAKIRAMRARLDAPAAKA.

Belongs to the CutC family.

The protein resides in the cytoplasm. The polypeptide is PF03932 family protein CutC (Rhizobium meliloti (strain 1021) (Ensifer meliloti)).